The chain runs to 903 residues: DNA transposase THAP9 (903 aa).

The THAP-type zinc finger occupies 1 to 89; sequence MTRSCSAVGC…LKKGAVPSVS (89 aa). An HCFC1-binding motif (HBM) motif is present at residues 123–126; the sequence is DHNY.

Active transposase that specifically recognizes the bipartite 5'-TXXGGGX(A/T)-3' consensus motif and mediates transposition. The sequence is that of DNA transposase THAP9 (THAP9) from Homo sapiens (Human).